Consider the following 147-residue polypeptide: Hemoglobin subunit beta-H0 (147 aa).

One can recognise a Globin domain in the interval histidine 3–histidine 147. Heme b-binding residues include histidine 64 and histidine 93.

Belongs to the globin family. In terms of assembly, heterotetramer of two alpha chains and two beta chains. Red blood cells.

Its function is as follows. This is a minor early embryonic beta chain. This chain is Hemoglobin subunit beta-H0 (Hbb-bh0), found in Mus musculus (Mouse).